An 896-amino-acid polypeptide reads, in one-letter code: DNA mismatch repair protein MutS (896 aa).

Residue 607–614 (GPNMSGKS) coordinates ATP. The tract at residues 809-835 (ANSVAPNTAASMPVEAADESQPVESET) is disordered.

The protein belongs to the DNA mismatch repair MutS family.

This protein is involved in the repair of mismatches in DNA. It is possible that it carries out the mismatch recognition step. This protein has a weak ATPase activity. The protein is DNA mismatch repair protein MutS of Lactiplantibacillus plantarum (strain ATCC BAA-793 / NCIMB 8826 / WCFS1) (Lactobacillus plantarum).